Consider the following 546-residue polypeptide: NAD(P)H-quinone oxidoreductase chain 4 (546 aa).

The next 14 helical transmembrane spans lie at 24–44, 56–76, 108–128, 132–152, 156–176, 188–208, 232–252, 263–283, 297–317, 326–346, 352–372, 396–416, 437–457, and 484–504; these read FPWL…IPFF, FALS…INGF, MPLI…AWPV, PKLF…VFAV, LLFF…LAIW, FIIY…AMGF, ILCY…VPLH, TAPV…YALL, FSPL…LTSF, IAYS…SFSS, AMLQ…LVGA, FALW…SGFV, VIMA…LLSM, and IYII…PRLV.

Belongs to the complex I subunit 4 family.

It localises to the cellular thylakoid membrane. It catalyses the reaction a plastoquinone + NADH + (n+1) H(+)(in) = a plastoquinol + NAD(+) + n H(+)(out). The catalysed reaction is a plastoquinone + NADPH + (n+1) H(+)(in) = a plastoquinol + NADP(+) + n H(+)(out). Functionally, NDH-1 shuttles electrons from NAD(P)H, via FMN and iron-sulfur (Fe-S) centers, to quinones in the respiratory chain. The immediate electron acceptor for the enzyme in this species is believed to be plastoquinone. Couples the redox reaction to proton translocation (for every two electrons transferred, four hydrogen ions are translocated across the cytoplasmic membrane), and thus conserves the redox energy in a proton gradient. In Prochlorococcus marinus subsp. pastoris (strain CCMP1986 / NIES-2087 / MED4), this protein is NAD(P)H-quinone oxidoreductase chain 4.